The primary structure comprises 407 residues: MSAVPLKNTDAAHDGVRSISVLGATGSIGDSTMDLLRAAPEKYRVEALTGNANVAGLAKLAKEFNARFVAVADPARLGELRAALAGTDIAYGAGESAVIEAAARPADWVMAAISGAAGLKPALAAVDRGATVALANKECLVCAGDFFMSRAVAAGSCILPADSEHNALFQALASGNRHELTRVIITASGGPFRTWSAADIEQATLAQALKHPNWSMGQKITIDSASMMNKGLEVIEASYLFALSPDEIDVLVHPQSIVHGMVEFADHSVVAQLGAPDMRIPIAHCLGWPDRIVGRAARLDLAKIGQLTFEAPDFERFPGLRLAYDALRAGNGATTVYNAANEIAVAAFIAQKIRFGAIARLVEDTLNAWIRAGNLAPLGSADDAIAVDHNARKMAATLLPQIAAKAS.

The NADPH site is built by threonine 25, glycine 26, serine 27, isoleucine 28, asparagine 53, and asparagine 136. A 1-deoxy-D-xylulose 5-phosphate-binding site is contributed by lysine 137. Glutamate 138 contributes to the NADPH binding site. A Mn(2+)-binding site is contributed by aspartate 162. 1-deoxy-D-xylulose 5-phosphate is bound by residues serine 163, glutamate 164, serine 188, and histidine 211. A Mn(2+)-binding site is contributed by glutamate 164. Residue glycine 217 coordinates NADPH. 4 residues coordinate 1-deoxy-D-xylulose 5-phosphate: serine 224, asparagine 229, lysine 230, and glutamate 233. Glutamate 233 lines the Mn(2+) pocket.

The protein belongs to the DXR family. Mg(2+) serves as cofactor. The cofactor is Mn(2+).

It catalyses the reaction 2-C-methyl-D-erythritol 4-phosphate + NADP(+) = 1-deoxy-D-xylulose 5-phosphate + NADPH + H(+). Its pathway is isoprenoid biosynthesis; isopentenyl diphosphate biosynthesis via DXP pathway; isopentenyl diphosphate from 1-deoxy-D-xylulose 5-phosphate: step 1/6. Catalyzes the NADPH-dependent rearrangement and reduction of 1-deoxy-D-xylulose-5-phosphate (DXP) to 2-C-methyl-D-erythritol 4-phosphate (MEP). The chain is 1-deoxy-D-xylulose 5-phosphate reductoisomerase from Rhodopseudomonas palustris (strain HaA2).